A 370-amino-acid polypeptide reads, in one-letter code: MQTAARRSFDYDMPLIQTPTSACQIRQAWAKVADTPDRETADRLKDEIKALLKEKNAVLVAHYYVDPLIQDLALETGGCVGDSLEMARFGAEHEAGTLVVAGVRFMGESAKILCPEKTVLMPDLEAECSLDLGCPEEAFSAFCDQHPDRTVVVYANTSAAVKARADWVVTSSVALEIVSYLKSRGEKLIWGPDRHLGDYICRETGADMLLWQGSCIVHNEFKGQELAALKAEHPEAVVLVHPESPQSVIELGDVVGSTSKLLKAAVSRPEKKFIVATDLGILHEMQKQAPDKQFIAAPTAGNGGSCKSCAFCPWMAMNSLGGIKYALTSGRNEILLDRKLGEAAKLPLQRMLDFAAGLKKKDVFNGMGPA.

Positions 62 and 83 each coordinate iminosuccinate. Cysteine 128 serves as a coordination point for [4Fe-4S] cluster. Iminosuccinate contacts are provided by residues 154-156 (YAN) and serine 171. [4Fe-4S] cluster is bound at residue cysteine 215. Residues 241–243 (HPE) and threonine 258 each bind iminosuccinate. A [4Fe-4S] cluster-binding site is contributed by cysteine 312.

This sequence belongs to the quinolinate synthase family. Type 1 subfamily. It depends on [4Fe-4S] cluster as a cofactor.

The protein localises to the cytoplasm. It carries out the reaction iminosuccinate + dihydroxyacetone phosphate = quinolinate + phosphate + 2 H2O + H(+). It participates in cofactor biosynthesis; NAD(+) biosynthesis; quinolinate from iminoaspartate: step 1/1. In terms of biological role, catalyzes the condensation of iminoaspartate with dihydroxyacetone phosphate to form quinolinate. The chain is Quinolinate synthase from Neisseria meningitidis serogroup B (strain ATCC BAA-335 / MC58).